An 87-amino-acid chain; its full sequence is U18-myrmicitoxin-Mri1a (87 aa).

The signal sequence occupies residues 1–32 (MKNNYNRINTFIVYLMVTFSLISIISITECTP). One can recognise an EGF-like domain in the interval 33-77 (NHDPCPPQYAEALCLNGGTCFSVTIMGSDNYNCICAPGFRGWRCQ). Intrachain disulfides connect Cys37-Cys52, Cys46-Cys65, and Cys67-Cys76.

In terms of processing, O-glycosylated. In terms of tissue distribution, expressed by the venom gland.

Its subcellular location is the secreted. The chain is U18-myrmicitoxin-Mri1a from Manica rubida (European giant red ant).